The chain runs to 35 residues: Kunitz-type proteinase inhibitor AEPI-III (35 aa).

Positions 4-35 (CNLPAVVGRCKGYFPRYFYNTEAGKCQRFIYG) constitute a BPTI/Kunitz inhibitor domain.

The protein belongs to the venom Kunitz-type family. Sea anemone type 2 potassium channel toxin subfamily.

It localises to the secreted. Its subcellular location is the nematocyst. Functionally, dual-function toxin that inhibits both the serine protease trypsin and voltage-gated potassium channels (Kv). This is Kunitz-type proteinase inhibitor AEPI-III from Actinia equina (Beadlet anemone).